Reading from the N-terminus, the 632-residue chain is Pheromone-processing carboxypeptidase kex1 (632 aa).

Residues 1–38 form the signal peptide; sequence MLLTTPSSRGSRAQSGIANVSWLALSLLLLFSPTLGSA. Topologically, residues 39 to 523 are lumenal; it reads KSAADYYVRS…KETEWKAYAK (485 aa). 2 N-linked (GlcNAc...) asparagine glycosylation sites follow: N119 and N126. Active-site residues include S190 and D390. N441 and N449 each carry an N-linked (GlcNAc...) asparagine glycan. The active site involves H452. The tract at residues 480-509 is disordered; sequence KPADSRIDGEKLPQTSVGGHPNSTAAEQQA. The segment covering 492-506 has biased composition (polar residues); that stretch reads PQTSVGGHPNSTAAE. An N-linked (GlcNAc...) asparagine glycan is attached at N501. Residues 524-544 traverse the membrane as a helical segment; the sequence is SGEAALIVVIIGVTVWGFFIW. At 545 to 632 the chain is on the cytoplasmic side; the sequence is RSRRRNRGYQ…SSTKPGGAQP (88 aa). The disordered stretch occupies residues 574 to 632; that stretch reads RSGPADVEAGDFDESELDNLHSPGLEQEHYAVGDDSDEESPNHQPAAPPSSTKPGGAQP. The span at 581 to 590 shows a compositional bias: acidic residues; the sequence is EAGDFDESEL.

This sequence belongs to the peptidase S10 family.

It is found in the golgi apparatus. Its subcellular location is the trans-Golgi network membrane. It carries out the reaction Preferential release of a C-terminal arginine or lysine residue.. Its function is as follows. Protease with a carboxypeptidase B-like function involved in the C-terminal processing of the lysine and arginine residues from protein precursors. Promotes cell fusion and is involved in the programmed cell death. In Aspergillus fumigatus (strain CBS 144.89 / FGSC A1163 / CEA10) (Neosartorya fumigata), this protein is Pheromone-processing carboxypeptidase kex1 (kex1).